The following is an 88-amino-acid chain: Putative defensin-like protein 264 (88 aa).

The N-terminal stretch at 1–26 (MEKMVLRKVVLLAILLSLSCLWVAKA) is a signal peptide. Intrachain disulfides connect C47–C65, C53–C70, and C57–C72.

This sequence belongs to the DEFL family.

It is found in the secreted. The chain is Putative defensin-like protein 264 from Arabidopsis thaliana (Mouse-ear cress).